The sequence spans 209 residues: Imidazole glycerol phosphate synthase subunit HisH (209 aa).

The 207-residue stretch at Lys3–Phe209 folds into the Glutamine amidotransferase type-1 domain. Cys81 acts as the Nucleophile in catalysis. Active-site residues include His185 and Glu187.

Heterodimer of HisH and HisF.

The protein localises to the cytoplasm. The catalysed reaction is 5-[(5-phospho-1-deoxy-D-ribulos-1-ylimino)methylamino]-1-(5-phospho-beta-D-ribosyl)imidazole-4-carboxamide + L-glutamine = D-erythro-1-(imidazol-4-yl)glycerol 3-phosphate + 5-amino-1-(5-phospho-beta-D-ribosyl)imidazole-4-carboxamide + L-glutamate + H(+). It carries out the reaction L-glutamine + H2O = L-glutamate + NH4(+). It functions in the pathway amino-acid biosynthesis; L-histidine biosynthesis; L-histidine from 5-phospho-alpha-D-ribose 1-diphosphate: step 5/9. Its function is as follows. IGPS catalyzes the conversion of PRFAR and glutamine to IGP, AICAR and glutamate. The HisH subunit catalyzes the hydrolysis of glutamine to glutamate and ammonia as part of the synthesis of IGP and AICAR. The resulting ammonia molecule is channeled to the active site of HisF. The chain is Imidazole glycerol phosphate synthase subunit HisH from Prochlorococcus marinus (strain NATL2A).